The chain runs to 264 residues: 3-methyl-2-oxobutanoate hydroxymethyltransferase (264 aa).

2 residues coordinate Mg(2+): Asp45 and Asp84. 3-methyl-2-oxobutanoate contacts are provided by residues 45 to 46, Asp84, and Lys112; that span reads DS. Glu114 is a Mg(2+) binding site. The Proton acceptor role is filled by Glu181.

The protein belongs to the PanB family. As to quaternary structure, homodecamer; pentamer of dimers. Requires Mg(2+) as cofactor.

The protein resides in the cytoplasm. The enzyme catalyses 3-methyl-2-oxobutanoate + (6R)-5,10-methylene-5,6,7,8-tetrahydrofolate + H2O = 2-dehydropantoate + (6S)-5,6,7,8-tetrahydrofolate. It participates in cofactor biosynthesis; (R)-pantothenate biosynthesis; (R)-pantoate from 3-methyl-2-oxobutanoate: step 1/2. Functionally, catalyzes the reversible reaction in which hydroxymethyl group from 5,10-methylenetetrahydrofolate is transferred onto alpha-ketoisovalerate to form ketopantoate. The chain is 3-methyl-2-oxobutanoate hydroxymethyltransferase from Shigella boydii serotype 18 (strain CDC 3083-94 / BS512).